The primary structure comprises 54 residues: uncharacterized protein (54 aa).

This is an uncharacterized protein from Haemophilus influenzae (strain ATCC 51907 / DSM 11121 / KW20 / Rd).